The sequence spans 146 residues: Angiogenin (146 aa).

An N-terminal signal peptide occupies residues 1–24 (MVMGLGLFLLVFMLGLGLTPPTLA). Residue glutamine 25 is modified to Pyrrolidone carboxylic acid. Histidine 37 functions as the Proton acceptor in the catalytic mechanism. Arginine 45 contacts tRNA. 3 cysteine pairs are disulfide-bonded: cysteine 50–cysteine 105, cysteine 63–cysteine 116, and cysteine 81–cysteine 131. The Nucleolar localization signal signature appears at 55–59 (RRRHL). TRNA contacts are provided by cysteine 105 and isoleucine 127. Histidine 138 functions as the Proton donor in the catalytic mechanism.

This sequence belongs to the pancreatic ribonuclease family. Homodimer. Interacts with RNH1; inhibiting ANG ribonuclease activity. Interacts with PCNA.

The protein localises to the secreted. It is found in the nucleus. It localises to the nucleolus. Its subcellular location is the cytoplasm. The protein resides in the stress granule. With respect to regulation, has weak tRNA ribonuclease activity by itself due to partial autoinhibition by its C-terminus, which folds into a short alpha-helix that partially occludes the substrate-binding site. In absence of stress, the ribonuclease activity is inhibited by RNH1 in the cytoplasm. In response to stress, dissociates from RNH1 in the cytoplasm and associates with cytoplasmic ribosomes with vacant A-sites: ribosomes directly activate the tRNA ribonuclease activity of ANG by refolding the C-terminal alpha-helix. In response to stress, the angiogenic activity of ANG is inhibited by RNH1 in the nucleus. Its function is as follows. Secreted ribonuclease that can either promote or restrict cell proliferation of target cells, depending on the context. Endocytosed in target cells via its receptor PLXNB2 and translocates to the cytoplasm or nucleus. Under stress conditions, localizes to the cytoplasm and promotes the assembly of stress granules (SGs): specifically cleaves a subset of tRNAs within anticodon loops to produce tRNA-derived stress-induced fragments (tiRNAs), resulting in translation repression and inhibition of cell proliferation. tiRNas also prevent formation of apoptosome, thereby promoting cell survival. Preferentially cleaves RNAs between a pyrimidine and an adenosine residue, suggesting that it cleaves the anticodon loop of tRNA(Ala) (32-UUAGCAU-38) after positions 33 and 36. Cleaves a subset of tRNAs, including tRNA(Ala), tRNA(Glu), tRNA(Gly), tRNA(Lys), tRNA(Val), tRNA(His), tRNA(Asp) and tRNA(Sec). Under growth conditions and in differentiated cells, translocates to the nucleus and stimulates ribosomal RNA (rRNA) transcription, including that containing the initiation site sequences of 45S rRNA, thereby promoting cell growth and proliferation. Angiogenin induces vascularization of normal and malignant tissues via its ability to promote rRNA transcription. Involved in hematopoietic stem and progenitor cell (HSPC) growth and survival by promoting rRNA transcription in growth conditions and inhibiting translation in response to stress, respectively. Mediates the crosstalk between myeloid and intestinal epithelial cells to protect the intestinal epithelial barrier integrity: secreted by myeloid cells and promotes intestinal epithelial cells proliferation and survival. Also mediates osteoclast-endothelial cell crosstalk in growing bone: produced by osteoclasts and protects the neighboring vascular cells against senescence by promoting rRNA transcription. This chain is Angiogenin (ANG), found in Macaca mulatta (Rhesus macaque).